Here is a 117-residue protein sequence, read N- to C-terminus: Large ribosomal subunit protein eL8 (117 aa).

Belongs to the eukaryotic ribosomal protein eL8 family. Part of the 50S ribosomal subunit. Probably part of the RNase P complex.

Its subcellular location is the cytoplasm. Its function is as follows. Multifunctional RNA-binding protein that recognizes the K-turn motif in ribosomal RNA, the RNA component of RNase P, box H/ACA, box C/D and box C'/D' sRNAs. This Methanococcus aeolicus (strain ATCC BAA-1280 / DSM 17508 / OCM 812 / Nankai-3) protein is Large ribosomal subunit protein eL8.